A 142-amino-acid chain; its full sequence is MKKKKTYGEVYALGQYISMSAPKARRVIDQIRGRSYEETLMLLALMPYRACDPILKLVNSAAANARHNMSFNEATLVISKAEVNEGTTVKKLKPRARGRSYPIRRPTCHIRIVLQDTSFDEFEEDFFSLKKDAWEKKIRTKI.

This sequence belongs to the universal ribosomal protein uL22 family. As to quaternary structure, part of the 50S ribosomal subunit.

It is found in the plastid. The protein localises to the chloroplast. Functionally, this protein binds specifically to 23S rRNA. In terms of biological role, the globular domain of the protein is located near the polypeptide exit tunnel on the outside of the subunit, while an extended beta-hairpin is found that lines the wall of the exit tunnel in the center of the 70S ribosome. The polypeptide is Large ribosomal subunit protein uL22c (rpl22) (Oenothera parviflora (Small-flowered evening primrose)).